The chain runs to 163 residues: uncharacterized protein (163 aa).

The disordered stretch occupies residues 142-163; the sequence is PQIVISEHNNTKETSPSRQFEH. The span at 153–163 shows a compositional bias: polar residues; it reads KETSPSRQFEH.

Belongs to the RCAN family.

Inhibits calcineurin-dependent transcriptional responses by binding to the catalytic domain of calcineurin. This is an uncharacterized protein from Schizosaccharomyces pombe (strain 972 / ATCC 24843) (Fission yeast).